We begin with the raw amino-acid sequence, 137 residues long: Probable leaf thionin (137 aa).

The first 28 residues, 1-28 (MATNKSIKSVVICVLILGLVLEQVQVEG), serve as a signal peptide directing secretion. Disulfide bonds link Cys-31/Cys-68, Cys-32/Cys-60, Cys-40/Cys-58, and Cys-44/Cys-54. A propeptide spans 75 to 137 (LNLLPESGEP…DGDVIQSVEA (63 aa)) (acidic domain).

Belongs to the plant thionin (TC 1.C.44) family. 4 C-C subfamily.

It is found in the secreted. Its function is as follows. Thionins are small plant proteins which are toxic to animal cells. They seem to exert their toxic effect at the level of the cell membrane. Their precise function is not known. The chain is Probable leaf thionin from Hordeum vulgare (Barley).